Here is a 90-residue protein sequence, read N- to C-terminus: Acylphosphatase (90 aa).

The region spanning 3 to 90 is the Acylphosphatase-like domain; the sequence is QKLFIVTGHV…EQFEHFEIRR (88 aa). Residues Arg18 and Asn36 contribute to the active site.

The protein belongs to the acylphosphatase family.

It catalyses the reaction an acyl phosphate + H2O = a carboxylate + phosphate + H(+). The sequence is that of Acylphosphatase (acyP) from Actinobacillus pleuropneumoniae serotype 5b (strain L20).